Reading from the N-terminus, the 88-residue chain is MCVCAIPFFEFFLPFIPHYAFLLFVSSVRFTVNERCYYLVCVLKLNCAFFFMVMIFELKRVCVSYLDRSRKIQIVSFFPFITIIFFHS.

2 helical membrane passes run 5-25 (AIPF…LLFV) and 36-56 (CYYL…VMIF).

It localises to the membrane. This is an uncharacterized protein from Saccharomyces cerevisiae (strain ATCC 204508 / S288c) (Baker's yeast).